The chain runs to 356 residues: Heat-inducible transcription repressor HrcA (356 aa).

It belongs to the HrcA family.

Negative regulator of class I heat shock genes (grpE-dnaK-dnaJ and groELS operons). Prevents heat-shock induction of these operons. This chain is Heat-inducible transcription repressor HrcA, found in Bartonella tribocorum (strain CIP 105476 / IBS 506).